Here is a 155-residue protein sequence, read N- to C-terminus: Small ribosomal subunit protein uS7 (155 aa).

It belongs to the universal ribosomal protein uS7 family. In terms of assembly, part of the 30S ribosomal subunit. Contacts proteins S9 and S11.

One of the primary rRNA binding proteins, it binds directly to 16S rRNA where it nucleates assembly of the head domain of the 30S subunit. Is located at the subunit interface close to the decoding center, probably blocks exit of the E-site tRNA. In Mycoplasma genitalium (strain ATCC 33530 / DSM 19775 / NCTC 10195 / G37) (Mycoplasmoides genitalium), this protein is Small ribosomal subunit protein uS7.